The primary structure comprises 96 residues: Large ribosomal subunit protein eL14 (96 aa).

It belongs to the eukaryotic ribosomal protein eL14 family.

This chain is Large ribosomal subunit protein eL14, found in Saccharolobus solfataricus (strain ATCC 35092 / DSM 1617 / JCM 11322 / P2) (Sulfolobus solfataricus).